The chain runs to 82 residues: Defensin-like protein 275 (82 aa).

A signal peptide spans 1–23 (MALSKFQLVALLITYTLLFSCQS). Intrachain disulfides connect Cys-36/Cys-78, Cys-42/Cys-65, Cys-48/Cys-76, and Cys-52/Cys-77.

It belongs to the DEFL family.

The protein localises to the secreted. The chain is Defensin-like protein 275 from Arabidopsis thaliana (Mouse-ear cress).